Here is a 599-residue protein sequence, read N- to C-terminus: Spermatogenesis-associated protein 7 (599 aa).

The interval 163-205 (KSSKVITNGPEKNSSSSPSSVDYAASGPRKLSSGALYGRRPRS) is disordered. Positions 166 to 175 (KVITNGPEKN) are enriched in polar residues.

As to quaternary structure, found in a complex with CFAP410, NEK1 and SPATA7. Interacts with NEK1. Interacts with RPGRIP1. Interacts with RPGR. Interacts with NPHP4. Interacts with NPHP1. Interacts with AHI1.

It localises to the cytoplasm. The protein resides in the cytoskeleton. Its subcellular location is the cilium axoneme. The protein localises to the cilium basal body. It is found in the cell projection. It localises to the cilium. The protein resides in the photoreceptor outer segment. Involved in the maintenance of both rod and cone photoreceptor cells. It is required for recruitment and proper localization of RPGRIP1 to the photoreceptor connecting cilium (CC), as well as photoreceptor-specific localization of proximal CC proteins at the distal CC. Maintenance of protein localization at the photoreceptor-specific distal CC is essential for normal microtubule stability and to prevent photoreceptor degeneration. This chain is Spermatogenesis-associated protein 7 (SPATA7), found in Homo sapiens (Human).